We begin with the raw amino-acid sequence, 433 residues long: Glutamate-1-semialdehyde 2,1-aminomutase (433 aa).

Residue lysine 273 is modified to N6-(pyridoxal phosphate)lysine.

This sequence belongs to the class-III pyridoxal-phosphate-dependent aminotransferase family. HemL subfamily. In terms of assembly, homodimer. Requires pyridoxal 5'-phosphate as cofactor.

Its subcellular location is the cytoplasm. The catalysed reaction is (S)-4-amino-5-oxopentanoate = 5-aminolevulinate. It participates in porphyrin-containing compound metabolism; protoporphyrin-IX biosynthesis; 5-aminolevulinate from L-glutamyl-tRNA(Glu): step 2/2. Its pathway is porphyrin-containing compound metabolism; chlorophyll biosynthesis. This chain is Glutamate-1-semialdehyde 2,1-aminomutase, found in Rippkaea orientalis (strain PCC 8801 / RF-1) (Cyanothece sp. (strain PCC 8801)).